The primary structure comprises 2150 residues: Zinc finger protein sdc-3 (2150 aa).

The segment at 443-987 (QEITSPMFAL…DQVENEEPER (545 aa)) is dosage compensation domain 1. Disordered stretches follow at residues 874-894 (EKEWHEMRAAQRAQKEKEEED), 1261-1373 (GSVV…GPEV), 1411-1448 (FETSPVPAPEGNIPSRAHSSDDDVQVISSETDPNGPIN), and 1491-1670 (EVLQ…SEKL). Residues 1267–1293 (TNQQEENVTSEGPTLQEGSSIPSSSHI) show a composition bias toward polar residues. Residues 1321–1333 (KKSGKTTRGRPKK) are compositionally biased toward basic residues. The segment covering 1347–1357 (GQKEEAAHEPE) has biased composition (basic and acidic residues). The segment covering 1504 to 1524 (SSKKRGRRRKKTPPHIAKARK) has biased composition (basic residues). The tract at residues 1508 to 1516 (RGRRRKKTP) is sex determination domain. Residues 1585–1598 (EDLHETERPGHVGE) are compositionally biased toward basic and acidic residues. Positions 1638-1648 (IQSQAGTNASP) are enriched in polar residues. 2 C2H2-type zinc fingers span residues 2078–2105 (HKCVQCSIRNQSVYFSSYSLLELHGKLH) and 2117–2141 (DDCQDCYETLTSSFEVIVHRINHHH). A dosage compensation domain 2 region spans residues 2080-2105 (CVQCSIRNQSVYFSSYSLLELHGKLH).

Component of the SDC complex, which consists of sdc-1, sdc-2 and sdc-3. Within the complex, interacts with sdc-1 and sdc-2. Interacts with dpy-21. In terms of processing, sumoylated. Sumoylation is important for assembly of the dosage compensation complex and its robust binding to the X chromosome. In terms of tissue distribution, expressed in somatic and in germline tissues in hermaphrodites (XX). In males (XO), only present in embryos younger than the 100-cell stage (at protein level).

It is found in the chromosome. The protein localises to the nucleus. Functionally, component of the SDC complex that functions in sex determination and in X chromosome dosage compensation specifically in hermaphrodite (XX) animals. Plays a central role in the recruitment of the condensin I-like dosage compensation complex to the male sex-determining autosomal gene her-1, thereby contributing to its repression and initiating hermaphrodite sexual development. Involved in the recruitment and assembly of the dosage compensation complex and the dosage compensation protein dpy-21 onto the X chromosomes in hermaphrodites, which leads to a reduction of X-linked gene transcription and an equalization of X-linked gene expression between the sexes. This is Zinc finger protein sdc-3 (sdc-3) from Caenorhabditis elegans.